A 131-amino-acid chain; its full sequence is Glycine cleavage system H protein (131 aa).

Residues 24-106 (RVTVGISDHA…YGEGWIFVVE (83 aa)) enclose the Lipoyl-binding domain. Residue Lys-65 is modified to N6-lipoyllysine.

It belongs to the GcvH family. The glycine cleavage system is composed of four proteins: P, T, L and H. (R)-lipoate is required as a cofactor.

In terms of biological role, the glycine cleavage system catalyzes the degradation of glycine. The H protein shuttles the methylamine group of glycine from the P protein to the T protein. The polypeptide is Glycine cleavage system H protein (Xanthomonas axonopodis pv. citri (strain 306)).